Consider the following 725-residue polypeptide: Antigen peptide transporter 1 (725 aa).

Over 1-8 (MAAHAWPT) the chain is Cytoplasmic. Residues 9–29 (AALLLLLVDWLLLRPVLPGIF) form a helical membrane-spanning segment. The Lumenal portion of the chain corresponds to 30–38 (SLLVPEVPL). The chain crosses the membrane as a helical span at residues 39-60 (LRVWAVGLSRWAILGLGVRGVL). The Cytoplasmic portion of the chain corresponds to 61–67 (GVTAGAR). The chain crosses the membrane as a helical span at residues 68–88 (GWLAALQPLVAALGLALPGLA). Topologically, residues 89 to 110 (SFRKLSAWGALREGDNAGLLHW) are lumenal. Residues 111 to 131 (NSRLDAFVLSYVAALPAAALW) form a helical membrane-spanning segment. At 132–163 (HKLGGFWAPSGHKGAGDMLCRMLGFLDSKKGR) the chain is on the cytoplasmic side. A helical membrane pass occupies residues 164–184 (LHLVLVLLILSCLGEMAIPFF). The ABC transmembrane type-1 domain occupies 164-447 (LHLVLVLLIL…LLSIYPSMQK (284 aa)). Topologically, residues 185-204 (TGRITDWILQDKTAPSFARN) are lumenal. Residues 205–225 (MWLMCILTIASTVLEFAGDGI) form a helical membrane-spanning segment. Over 226 to 275 (YNITMGHMHSRVHGEVFRAVLHQETGFFLKNPTGSITSRVTEDTSNVCES) the chain is Cytoplasmic. A helical membrane pass occupies residues 276 to 296 (ISDKLNLFLWYLGRGLCLLAF). At 297–305 (MIWGSFYLT) the chain is on the lumenal side. The chain crosses the membrane as a helical span at residues 306-326 (VVTLLSLPLLFLLPRRLGKVY). At 327–395 (QSLAVKVQES…VTEVWTMSVS (69 aa)) the chain is on the cytoplasmic side. The tract at residues 352-397 (PTVRSFANEEGEAQKFRQKLEEMKPLNKKEALAYVTEVWTMSVSGM) is part of the peptide-binding site. A helical transmembrane segment spans residues 396–416 (GMLLKVGILYLGGQLVVRGAV). Residues 417-420 (SSGN) are Lumenal-facing. Residues 421 to 441 (LVSFVLYQLQFTRAVEVLLSI) traverse the membrane as a helical segment. The segment at 430–464 (QFTRAVEVLLSIYPSMQKSVGASEKIFEYLDRTPC) is part of the peptide-binding site. At 442–725 (YPSMQKSVGA…MVEALAAPSD (284 aa)) the chain is on the cytoplasmic side. One can recognise an ABC transporter domain in the interval 480–719 (VKFQDVSFAY…GGCYRSMVEA (240 aa)). Residues 515-523 (GPNGSGKST), 618-624 (NQLSGGQ), and Gln-678 each bind ATP. Ser-522 contributes to the Mg(2+) binding site.

It belongs to the ABC transporter superfamily. ABCB family. MHC peptide exporter (TC 3.A.1.209) subfamily. In terms of assembly, heterodimer of TAP1 and TAP2 (TAP1-TAP2). A component of the peptide loading complex (PLC), interacts via TAPBP with MHCI heterodimer; this interaction mediates peptide-MHCI assembly. Interacts with PSMB5 and PSMB8. Mg(2+) is required as a cofactor.

The protein resides in the endoplasmic reticulum membrane. The enzyme catalyses a peptide antigen(in) + ATP + H2O = a peptide antigen(out) + ADP + phosphate + H(+). In terms of biological role, ABC transporter associated with antigen processing. In complex with TAP2 mediates unidirectional translocation of peptide antigens from cytosol to endoplasmic reticulum (ER) for loading onto MHC class I (MHCI) molecules. Uses the chemical energy of ATP to export peptides against the concentration gradient. During the transport cycle alternates between 'inward-facing' state with peptide binding site facing the cytosol to 'outward-facing' state with peptide binding site facing the ER lumen. Peptide antigen binding to ATP-loaded TAP1-TAP2 induces a switch to hydrolysis-competent 'outward-facing' conformation ready for peptide loading onto nascent MHCI molecules. Subsequently ATP hydrolysis resets the transporter to the 'inward facing' state for a new cycle. As a component of the peptide loading complex (PLC), acts as a molecular scaffold essential for peptide-MHCI assembly and antigen presentation. The sequence is that of Antigen peptide transporter 1 (Tap1) from Rattus norvegicus (Rat).